Consider the following 352-residue polypeptide: UDP-N-acetylglucosamine--N-acetylmuramyl-(pentapeptide) pyrophosphoryl-undecaprenol N-acetylglucosamine transferase (352 aa).

UDP-N-acetyl-alpha-D-glucosamine-binding positions include 14-16, N124, R164, S185, and Q285; that span reads TGG.

It belongs to the glycosyltransferase 28 family. MurG subfamily.

It localises to the cell inner membrane. The catalysed reaction is di-trans,octa-cis-undecaprenyl diphospho-N-acetyl-alpha-D-muramoyl-L-alanyl-D-glutamyl-meso-2,6-diaminopimeloyl-D-alanyl-D-alanine + UDP-N-acetyl-alpha-D-glucosamine = di-trans,octa-cis-undecaprenyl diphospho-[N-acetyl-alpha-D-glucosaminyl-(1-&gt;4)]-N-acetyl-alpha-D-muramoyl-L-alanyl-D-glutamyl-meso-2,6-diaminopimeloyl-D-alanyl-D-alanine + UDP + H(+). It functions in the pathway cell wall biogenesis; peptidoglycan biosynthesis. In terms of biological role, cell wall formation. Catalyzes the transfer of a GlcNAc subunit on undecaprenyl-pyrophosphoryl-MurNAc-pentapeptide (lipid intermediate I) to form undecaprenyl-pyrophosphoryl-MurNAc-(pentapeptide)GlcNAc (lipid intermediate II). The protein is UDP-N-acetylglucosamine--N-acetylmuramyl-(pentapeptide) pyrophosphoryl-undecaprenol N-acetylglucosamine transferase of Chlamydia trachomatis serovar L2 (strain ATCC VR-902B / DSM 19102 / 434/Bu).